The chain runs to 292 residues: General transcription factor IIE subunit 2 (292 aa).

Methionine 1 is modified (N-acetylmethionine). Residues 17 to 64 are disordered; the sequence is LSTPVVEKRAVPSESPSSSSSKKKKAKVEHGGSSGSKQNSDHNNGSFN. The segment covering 51 to 63 has biased composition (polar residues); sequence GSKQNSDHNNGSF. The residue at position 62 (serine 62) is a Phosphoserine. The TFIIE beta DNA-binding region spans 67–147; sequence ALSGSSGYKF…YAFKPKYNLK (81 aa). An N6-acetyllysine modification is found at lysine 75. Residues 245–277 form a disordered region; the sequence is SMQESGPKKVASIQRRKKPASQKKRRFKTHNEH. Residues 258–272 show a composition bias toward basic residues; the sequence is QRRKKPASQKKRRFK.

The protein belongs to the TFIIE beta subunit family. As to quaternary structure, tetramer of two alpha and two beta chains. Interacts with FACT subunit SUPT16H. Interacts with ATF7IP. Interacts with SND1. Part of TBP-based Pol II pre-initiation complex (PIC), in which Pol II core assembles with general transcription factors and other specific initiation factors including GTF2E1, GTF2E2, GTF2F1, GTF2F2, TCEA1, ERCC2, ERCC3, GTF2H2, GTF2H3, GTF2H4, GTF2H5, GTF2A1, GTF2A2, GTF2B and TBP; this large multi-subunit PIC complex mediates DNA unwinding and targets Pol II core to the transcription start site where the first phosphodiester bond forms.

It is found in the nucleus. Functionally, recruits TFIIH to the initiation complex and stimulates the RNA polymerase II C-terminal domain kinase and DNA-dependent ATPase activities of TFIIH. Both TFIIH and TFIIE are required for promoter clearance by RNA polymerase. The protein is General transcription factor IIE subunit 2 (Gtf2e2) of Mus musculus (Mouse).